Consider the following 515-residue polypeptide: Germ cell-less protein-like 1 (515 aa).

Residues 1 to 35 (MGSLSSRVLRQPRPALAQQAQGARAGGSARRPDTG) are disordered. The span at 11 to 29 (QPRPALAQQAQGARAGGSA) shows a compositional bias: low complexity. The Nuclear localization signal signature appears at 49–55 (SHKRKRS). Residues 65-85 (DSETDEDEEEGDEQQRLLNTP) are disordered. Ser-66 is modified (phosphoserine). The span at 67–76 (ETDEDEEEGD) shows a compositional bias: acidic residues. Thr-68 is subject to Phosphothreonine. The Nuclear localization signal motif lies at 85 to 91 (PRRKKLK). The 71-residue stretch at 108 to 178 (SDIKICALGE…LYRDDVLIKP (71 aa)) folds into the BTB domain.

Interacts with TMPO-beta, TSG101 and TFDP2. Interacts with EMD.

The protein localises to the nucleus matrix. Possible function in spermatogenesis. Enhances the degradation of MDM2 and increases the amount of p53 probably by modulating the nucleocytoplasmic transport. The protein is Germ cell-less protein-like 1 (GMCL1) of Homo sapiens (Human).